A 354-amino-acid chain; its full sequence is 4-hydroxy-3-methylbut-2-en-1-yl diphosphate synthase (flavodoxin) (354 aa).

4 residues coordinate [4Fe-4S] cluster: Cys265, Cys268, Cys300, and Glu307.

Belongs to the IspG family. [4Fe-4S] cluster is required as a cofactor.

It carries out the reaction (2E)-4-hydroxy-3-methylbut-2-enyl diphosphate + oxidized [flavodoxin] + H2O + 2 H(+) = 2-C-methyl-D-erythritol 2,4-cyclic diphosphate + reduced [flavodoxin]. It functions in the pathway isoprenoid biosynthesis; isopentenyl diphosphate biosynthesis via DXP pathway; isopentenyl diphosphate from 1-deoxy-D-xylulose 5-phosphate: step 5/6. Its function is as follows. Converts 2C-methyl-D-erythritol 2,4-cyclodiphosphate (ME-2,4cPP) into 1-hydroxy-2-methyl-2-(E)-butenyl 4-diphosphate. The sequence is that of 4-hydroxy-3-methylbut-2-en-1-yl diphosphate synthase (flavodoxin) from Hydrogenobaculum sp. (strain Y04AAS1).